A 549-amino-acid chain; its full sequence is Glucose-6-phosphate isomerase (549 aa).

Glu355 serves as the catalytic Proton donor. Catalysis depends on residues His386 and Lys514.

This sequence belongs to the GPI family.

The protein localises to the cytoplasm. It carries out the reaction alpha-D-glucose 6-phosphate = beta-D-fructose 6-phosphate. It functions in the pathway carbohydrate biosynthesis; gluconeogenesis. Its pathway is carbohydrate degradation; glycolysis; D-glyceraldehyde 3-phosphate and glycerone phosphate from D-glucose: step 2/4. Its function is as follows. Catalyzes the reversible isomerization of glucose-6-phosphate to fructose-6-phosphate. The chain is Glucose-6-phosphate isomerase from Salmonella paratyphi B (strain ATCC BAA-1250 / SPB7).